A 267-amino-acid chain; its full sequence is MSKSKAIENNGISNTNSPNGKYMAPRPEGVKPTCVVITYSVSKDIKAVREVLDERGASVHYIIDKDGTQKEYHNDLTDQAFYAGKSSWKGEVGVNKFGIGVMLINDAKSDFPAEQIGKLKEFLKDVTERYPNLDLKHDLVGLGEVTVNREGNAHIAPGSKFPWKELAEAGFGRYFETTQEQKSKLLLSLDSTGEKVNTLQENLKEYGYGVESTSTFDQFTQQAVRVFNDRYGTGLPNEEPPVSWTEAGQDVLSQLLGQTVLEQTENA.

A disordered region spans residues 1 to 25 (MSKSKAIENNGISNTNSPNGKYMAP). Polar residues predominate over residues 10–19 (NGISNTNSPN). An N-acetylmuramoyl-L-alanine amidase domain is found at 33–141 (TCVVITYSVS…NLDLKHDLVG (109 aa)).

This sequence belongs to the N-acetylmuramoyl-L-alanine amidase 2 family.

Its subcellular location is the secreted. It carries out the reaction Hydrolyzes the link between N-acetylmuramoyl residues and L-amino acid residues in certain cell-wall glycopeptides.. This chain is Putative N-acetylmuramoyl-L-alanine amidase RC0497, found in Rickettsia conorii (strain ATCC VR-613 / Malish 7).